The primary structure comprises 302 residues: Protoheme IX farnesyltransferase (302 aa).

The next 9 membrane-spanning stretches (helical) occupy residues 27 to 47 (VLTL…QSIH), 48 to 68 (PVLG…AGAL), 97 to 117 (SALH…GLAL), 119 to 139 (VLAA…YTIW), 148 to 168 (IVIG…AATG), 176 to 196 (LLFA…ALFI), 219 to 239 (IQIM…WAMG), 240 to 260 (LTGA…LLLA), and 280 to 300 (LFGF…ADKV).

It belongs to the UbiA prenyltransferase family. Protoheme IX farnesyltransferase subfamily.

It is found in the cell inner membrane. It catalyses the reaction heme b + (2E,6E)-farnesyl diphosphate + H2O = Fe(II)-heme o + diphosphate. It functions in the pathway porphyrin-containing compound metabolism; heme O biosynthesis; heme O from protoheme: step 1/1. In terms of biological role, converts heme B (protoheme IX) to heme O by substitution of the vinyl group on carbon 2 of heme B porphyrin ring with a hydroxyethyl farnesyl side group. This Rhizorhabdus wittichii (strain DSM 6014 / CCUG 31198 / JCM 15750 / NBRC 105917 / EY 4224 / RW1) (Sphingomonas wittichii) protein is Protoheme IX farnesyltransferase.